A 91-amino-acid polypeptide reads, in one-letter code: Probable Fe(2+)-trafficking protein (91 aa).

It belongs to the Fe(2+)-trafficking protein family. In terms of assembly, monomer.

Could be a mediator in iron transactions between iron acquisition and iron-requiring processes, such as synthesis and/or repair of Fe-S clusters in biosynthetic enzymes. The protein is Probable Fe(2+)-trafficking protein of Klebsiella pneumoniae subsp. pneumoniae (strain ATCC 700721 / MGH 78578).